A 318-amino-acid chain; its full sequence is Acetyl-coenzyme A carboxylase carboxyl transferase subunit alpha (318 aa).

The region spanning 36–293 (EIDRLKEKST…KTRLSEQLDQ (258 aa)) is the CoA carboxyltransferase C-terminal domain.

It belongs to the AccA family. As to quaternary structure, acetyl-CoA carboxylase is a heterohexamer composed of biotin carboxyl carrier protein (AccB), biotin carboxylase (AccC) and two subunits each of ACCase subunit alpha (AccA) and ACCase subunit beta (AccD).

It localises to the cytoplasm. It carries out the reaction N(6)-carboxybiotinyl-L-lysyl-[protein] + acetyl-CoA = N(6)-biotinyl-L-lysyl-[protein] + malonyl-CoA. Its pathway is lipid metabolism; malonyl-CoA biosynthesis; malonyl-CoA from acetyl-CoA: step 1/1. Its function is as follows. Component of the acetyl coenzyme A carboxylase (ACC) complex. First, biotin carboxylase catalyzes the carboxylation of biotin on its carrier protein (BCCP) and then the CO(2) group is transferred by the carboxyltransferase to acetyl-CoA to form malonyl-CoA. The protein is Acetyl-coenzyme A carboxylase carboxyl transferase subunit alpha of Teredinibacter turnerae (strain ATCC 39867 / T7901).